We begin with the raw amino-acid sequence, 546 residues long: Chaperonin GroEL (546 aa).

Residues 30-33 (TLGP), lysine 51, 87-91 (DGTTT), glycine 415, 479-481 (NAA), and aspartate 495 contribute to the ATP site.

The protein belongs to the chaperonin (HSP60) family. Forms a cylinder of 14 subunits composed of two heptameric rings stacked back-to-back. Interacts with the co-chaperonin GroES.

It localises to the cytoplasm. The catalysed reaction is ATP + H2O + a folded polypeptide = ADP + phosphate + an unfolded polypeptide.. Its function is as follows. Together with its co-chaperonin GroES, plays an essential role in assisting protein folding. The GroEL-GroES system forms a nano-cage that allows encapsulation of the non-native substrate proteins and provides a physical environment optimized to promote and accelerate protein folding. In Paraburkholderia phytofirmans (strain DSM 17436 / LMG 22146 / PsJN) (Burkholderia phytofirmans), this protein is Chaperonin GroEL.